The sequence spans 334 residues: N-acetyl-gamma-glutamyl-phosphate reductase (334 aa).

Cys-154 is an active-site residue.

It belongs to the NAGSA dehydrogenase family. Type 1 subfamily.

The protein resides in the cytoplasm. The catalysed reaction is N-acetyl-L-glutamate 5-semialdehyde + phosphate + NADP(+) = N-acetyl-L-glutamyl 5-phosphate + NADPH + H(+). It participates in amino-acid biosynthesis; L-arginine biosynthesis; N(2)-acetyl-L-ornithine from L-glutamate: step 3/4. In terms of biological role, catalyzes the NADPH-dependent reduction of N-acetyl-5-glutamyl phosphate to yield N-acetyl-L-glutamate 5-semialdehyde. In Yersinia pestis, this protein is N-acetyl-gamma-glutamyl-phosphate reductase.